We begin with the raw amino-acid sequence, 100 residues long: Integration host factor subunit alpha (100 aa).

The segment at phenylalanine 53–isoleucine 72 is disordered.

This sequence belongs to the bacterial histone-like protein family. In terms of assembly, heterodimer of an alpha and a beta chain.

This protein is one of the two subunits of integration host factor, a specific DNA-binding protein that functions in genetic recombination as well as in transcriptional and translational control. In Pseudomonas entomophila (strain L48), this protein is Integration host factor subunit alpha.